Consider the following 240-residue polypeptide: Uridylate kinase (240 aa).

12 to 15 (KISG) contacts ATP. The segment at 20–25 (GNQGFG) is involved in allosteric activation by GTP. Residue G54 coordinates UMP. ATP is bound by residues G55 and R59. Residues D74 and 135–142 (TGNPYFST) contribute to the UMP site. ATP contacts are provided by Y168 and D171.

This sequence belongs to the UMP kinase family. As to quaternary structure, homohexamer.

It localises to the cytoplasm. The enzyme catalyses UMP + ATP = UDP + ADP. Its pathway is pyrimidine metabolism; CTP biosynthesis via de novo pathway; UDP from UMP (UMPK route): step 1/1. Allosterically activated by GTP. Inhibited by UTP. Its function is as follows. Catalyzes the reversible phosphorylation of UMP to UDP. The chain is Uridylate kinase from Moorella thermoacetica (strain ATCC 39073 / JCM 9320).